Here is a 329-residue protein sequence, read N- to C-terminus: GTPase Obg (329 aa).

Residues 1–159 enclose the Obg domain; it reads MQFIDQACIS…WLLHLELKLL (159 aa). The region spanning 160 to 328 is the OBG-type G domain; the sequence is AEVGIIGLPN…LLKNVWEKLE (169 aa). ATP is bound by residues 166 to 173, 191 to 195, 213 to 216, 280 to 283, and 309 to 311; these read GLPNAGKS, FTTLI, DIPG, NKKE, and SAA. Positions 173 and 193 each coordinate Mg(2+).

Belongs to the TRAFAC class OBG-HflX-like GTPase superfamily. OBG GTPase family. In terms of assembly, monomer. Requires Mg(2+) as cofactor.

It localises to the cytoplasm. In terms of biological role, an essential GTPase which binds GTP, GDP and possibly (p)ppGpp with moderate affinity, with high nucleotide exchange rates and a fairly low GTP hydrolysis rate. Plays a role in control of the cell cycle, stress response, ribosome biogenesis and in those bacteria that undergo differentiation, in morphogenesis control. The sequence is that of GTPase Obg from Prochlorococcus marinus (strain MIT 9211).